The chain runs to 87 residues: Long neurotoxin homolog (87 aa).

The signal sequence occupies residues 1-21 (MKTLLLTLVVVTIVCLDLGYT). Cystine bridges form between cysteine 24-cysteine 47, cysteine 27-cysteine 32, cysteine 40-cysteine 64, cysteine 68-cysteine 80, and cysteine 81-cysteine 86.

As to expression, expressed by the venom gland.

It localises to the secreted. Inhibits carbachol-induced muscle contraction in a reversible manner. The protein is Long neurotoxin homolog of Bungarus multicinctus (Many-banded krait).